A 99-amino-acid polypeptide reads, in one-letter code: Cell division topological specificity factor (99 aa).

This sequence belongs to the MinE family.

Its function is as follows. Prevents the cell division inhibition by proteins MinC and MinD at internal division sites while permitting inhibition at polar sites. This ensures cell division at the proper site by restricting the formation of a division septum at the midpoint of the long axis of the cell. The polypeptide is Cell division topological specificity factor (Tolumonas auensis (strain DSM 9187 / NBRC 110442 / TA 4)).